Here is a 129-residue protein sequence, read N- to C-terminus: Prefoldin subunit 4 (129 aa).

Met-1 is modified (N-acetylmethionine).

This sequence belongs to the prefoldin subunit beta family. In terms of assembly, heterohexamer of two PFD-alpha type and four PFD-beta type subunits.

Its function is as follows. Binds specifically to cytosolic chaperonin (c-CPN) and transfers target proteins to it. Binds to nascent polypeptide chain and promotes folding in an environment in which there are many competing pathways for nonnative proteins. The sequence is that of Prefoldin subunit 4 (GIM3) from Saccharomyces cerevisiae (strain ATCC 204508 / S288c) (Baker's yeast).